Here is a 169-residue protein sequence, read N- to C-terminus: Peptide deformylase (169 aa).

2 residues coordinate Fe cation: C91 and H133. The active site involves E134. Residue H137 coordinates Fe cation.

Belongs to the polypeptide deformylase family. Fe(2+) is required as a cofactor.

It carries out the reaction N-terminal N-formyl-L-methionyl-[peptide] + H2O = N-terminal L-methionyl-[peptide] + formate. Functionally, removes the formyl group from the N-terminal Met of newly synthesized proteins. Requires at least a dipeptide for an efficient rate of reaction. N-terminal L-methionine is a prerequisite for activity but the enzyme has broad specificity at other positions. This chain is Peptide deformylase, found in Klebsiella pneumoniae (strain 342).